A 250-amino-acid chain; its full sequence is Octanoyltransferase (250 aa).

The region spanning 44–224 (GAGSDRLLLL…AVVQALNGDL (181 aa)) is the BPL/LPL catalytic domain. Substrate-binding positions include 82 to 89 (RGGKITWH), 154 to 156 (AIG), and 167 to 169 (GIS). Cys185 functions as the Acyl-thioester intermediate in the catalytic mechanism. The tract at residues 224–250 (LPVRDHDLPRPGTTPAAPNSTRVRSMT) is disordered. Polar residues predominate over residues 239 to 250 (AAPNSTRVRSMT).

The protein belongs to the LipB family.

It is found in the cytoplasm. The enzyme catalyses octanoyl-[ACP] + L-lysyl-[protein] = N(6)-octanoyl-L-lysyl-[protein] + holo-[ACP] + H(+). The protein operates within protein modification; protein lipoylation via endogenous pathway; protein N(6)-(lipoyl)lysine from octanoyl-[acyl-carrier-protein]: step 1/2. Its function is as follows. Catalyzes the transfer of endogenously produced octanoic acid from octanoyl-acyl-carrier-protein onto the lipoyl domains of lipoate-dependent enzymes. Lipoyl-ACP can also act as a substrate although octanoyl-ACP is likely to be the physiological substrate. The polypeptide is Octanoyltransferase (Nocardia farcinica (strain IFM 10152)).